The following is an 85-amino-acid chain: Large ribosomal subunit protein bL27 (85 aa).

The interval 1–20 (MAHKKAAGSTRNGRDSEAKR) is disordered.

It belongs to the bacterial ribosomal protein bL27 family.

The sequence is that of Large ribosomal subunit protein bL27 from Colwellia psychrerythraea (strain 34H / ATCC BAA-681) (Vibrio psychroerythus).